Here is a 788-residue protein sequence, read N- to C-terminus: Cap-specific mRNA (nucleoside-2'-O-)-methyltransferase 1 (788 aa).

Residues 25 to 71 (YSNKAMEMMKKMGYENDKGLGKSNQGRLEPIIAVQQDGRRGFGLKLD) enclose the G-patch domain. Substrate is bound by residues 143-147 (KTVFD) and Arg-158. The RrmJ-type SAM-dependent 2'-O-MTase domain maps to 171–384 (IFLNRAAVKM…ERYLVCKYKR (214 aa)). Asn-174 serves as a coordination point for S-adenosyl-L-methionine. Lys-179 is a catalytic residue. 215–221 (CAGPGGF) is a binding site for S-adenosyl-L-methionine. The active site involves Asp-298. 308-310 (NIQ) lines the substrate pocket. Lys-338 functions as the Proton acceptor in the catalytic mechanism. Substrate is bound at residue Asn-373.

Interacts (via C-terminus) with r2d2 (via C-terminus).

It localises to the nucleus. It is found in the cytoplasm. The catalysed reaction is a 5'-end (N(7)-methyl 5'-triphosphoguanosine)-ribonucleoside in mRNA + S-adenosyl-L-methionine = a 5'-end (N(7)-methyl 5'-triphosphoguanosine)-(2'-O-methyl-ribonucleoside) in mRNA + S-adenosyl-L-homocysteine + H(+). S-adenosyl-L-methionine-dependent methyltransferase that mediates mRNA cap1 2'-O-ribose methylation to the 5'-cap structure of mRNAs. Methylates the ribose of the first nucleotide of a m(7)GpppG-capped mRNA to produce m(7)GpppNmp (cap1). Positively regulates the Ago2-dependent small RNA pathway, with roles in both siRNA biogenesis and RISC assembly. Involved in facilitating conversion of pre-RISC into holo-RISC, possibly by promoting the unwinding of Ago2-bound siRNA duplexes and thus the retention of the guide strand in holo-RISC. The polypeptide is Cap-specific mRNA (nucleoside-2'-O-)-methyltransferase 1 (Drosophila melanogaster (Fruit fly)).